A 175-amino-acid chain; its full sequence is Putative lipoprotein LppN (175 aa).

The first 20 residues, 1–20 (MRLPGRHVLYALSAVTMLAA), serve as a signal peptide directing secretion. Cys-21 is lipidated: N-palmitoyl cysteine. The S-diacylglycerol cysteine moiety is linked to residue Cys-21. Positions 31 to 56 (ASTNMNPTNPPATAETATVSPTPAPQ) are disordered. Residues 33–48 (TNMNPTNPPATAETAT) are compositionally biased toward low complexity.

Its subcellular location is the cell membrane. The sequence is that of Putative lipoprotein LppN (lppN) from Mycobacterium bovis (strain ATCC BAA-935 / AF2122/97).